The following is a 469-amino-acid chain: MWKEKVQQYEDQIINDLKGLLAIESVRDDAKASEDAPVGPGPRKALDYMYEIAHRDGFTTHDVDHIAGRIEAGKGNDVLGILCHVDVVPAGDGWDSNPFEPVVTEDAIIARGTLDDKGPTIAAYYAIKILEDMNVDWKKRIHMIIGTDEESDWKCTDRYFKTEEMPTLGFAPDAEFPCIHGEKGITTFDLVQNKLTEDQDEPDYELITFKSGERYNMVPDHAEARVLVKENMTDVIQDFEYFLEQNHLQGDSTVDSGILVLTVEGKAVHGMDPSIGVNAGLYLLKFLASLNLDNNAQAFVAFSNRYLFNSDFGEKMGMKFHTDVMGDVTTNIGVITYDNENAGLFGINLRYPEGFEFEKAMDRFANEIQQYGFEVKLGKVQPPHYVDKNDPFVQKLVTAYRNQTNDMTEPYTIGGGTYARNLDKGVAFGAMFSDSEDLMHQKNEYITKKQLFNATSIYLEAIYSLCVEE.

His-84 is a binding site for Zn(2+). Asp-86 is an active-site residue. Asp-115 lines the Zn(2+) pocket. Glu-149 acts as the Proton acceptor in catalysis. Positions 150, 173, and 440 each coordinate Zn(2+).

The protein belongs to the peptidase M20A family. Requires Zn(2+) as cofactor.

The polypeptide is Putative dipeptidase SAUSA300_1697 (Staphylococcus aureus (strain USA300)).